The chain runs to 307 residues: 4-diphosphocytidyl-2-C-methyl-D-erythritol kinase (307 aa).

Lys16 is a catalytic residue. ATP is bound at residue 101–111 (PVAGGMAGGSA). Asp143 is an active-site residue.

This sequence belongs to the GHMP kinase family. IspE subfamily.

The catalysed reaction is 4-CDP-2-C-methyl-D-erythritol + ATP = 4-CDP-2-C-methyl-D-erythritol 2-phosphate + ADP + H(+). It participates in isoprenoid biosynthesis; isopentenyl diphosphate biosynthesis via DXP pathway; isopentenyl diphosphate from 1-deoxy-D-xylulose 5-phosphate: step 3/6. In terms of biological role, catalyzes the phosphorylation of the position 2 hydroxy group of 4-diphosphocytidyl-2C-methyl-D-erythritol. The sequence is that of 4-diphosphocytidyl-2-C-methyl-D-erythritol kinase from Nocardia farcinica (strain IFM 10152).